Consider the following 121-residue polypeptide: NADH-quinone oxidoreductase subunit A 1 (121 aa).

The next 3 helical transmembrane spans lie at 6–26 (FPIF…LSIG), 62–82 (LVAM…PWAV), and 90–110 (FYGL…YYYI).

This sequence belongs to the complex I subunit 3 family. In terms of assembly, NDH-1 is composed of 14 different subunits. Subunits NuoA, H, J, K, L, M, N constitute the membrane sector of the complex.

It localises to the cell inner membrane. The enzyme catalyses a quinone + NADH + 5 H(+)(in) = a quinol + NAD(+) + 4 H(+)(out). Functionally, NDH-1 shuttles electrons from NADH, via FMN and iron-sulfur (Fe-S) centers, to quinones in the respiratory chain. The immediate electron acceptor for the enzyme in this species is believed to be a menaquinone. Couples the redox reaction to proton translocation (for every two electrons transferred, four hydrogen ions are translocated across the cytoplasmic membrane), and thus conserves the redox energy in a proton gradient. The sequence is that of NADH-quinone oxidoreductase subunit A 1 from Chloroherpeton thalassium (strain ATCC 35110 / GB-78).